The sequence spans 720 residues: 1-deoxy-D-xylulose-5-phosphate synthase 1, chloroplastic (720 aa).

The transit peptide at 1–51 (MALTTFSISRGGFVGALPQEGHFAPAAAELSLHKLQSRPHKARRRSSSSIS) directs the protein to the chloroplast. The span at 35 to 46 (LQSRPHKARRRS) shows a compositional bias: basic residues. Residues 35-74 (LQSRPHKARRRSSSSISASLSTEREAAEYHSQRPPTPLLD) form a disordered region. The span at 56–65 (TEREAAEYHS) shows a compositional bias: basic and acidic residues. Residues H142 and 183–185 (GHS) contribute to the thiamine diphosphate site. Mg(2+) is bound at residue D214. Residues 215 to 216 (GA), N243, Y364, and E446 each bind thiamine diphosphate. N243 lines the Mg(2+) pocket.

The protein belongs to the transketolase family. DXPS subfamily. In terms of assembly, homodimer. Requires Mg(2+) as cofactor. It depends on thiamine diphosphate as a cofactor.

Its subcellular location is the plastid. It is found in the chloroplast stroma. It carries out the reaction D-glyceraldehyde 3-phosphate + pyruvate + H(+) = 1-deoxy-D-xylulose 5-phosphate + CO2. The protein operates within metabolic intermediate biosynthesis; 1-deoxy-D-xylulose 5-phosphate biosynthesis; 1-deoxy-D-xylulose 5-phosphate from D-glyceraldehyde 3-phosphate and pyruvate: step 1/1. Functionally, catalyzes the acyloin condensation reaction between C atoms 2 and 3 of pyruvate and glyceraldehyde 3-phosphate to yield 1-deoxy-D-xylulose-5-phosphate (DXP). Is a limiting enzyme for plastidic isoprenoid biosynthesis and essential for chloroplast development. The polypeptide is 1-deoxy-D-xylulose-5-phosphate synthase 1, chloroplastic (CLA1) (Oryza sativa subsp. japonica (Rice)).